We begin with the raw amino-acid sequence, 209 residues long: Orotate phosphoribosyltransferase (209 aa).

Residues Arg96, Lys100, His102, and 122-130 (EDLISTGGS) contribute to the 5-phospho-alpha-D-ribose 1-diphosphate site. An orotate-binding site is contributed by Ser126.

It belongs to the purine/pyrimidine phosphoribosyltransferase family. PyrE subfamily. As to quaternary structure, homodimer. Mg(2+) serves as cofactor.

It catalyses the reaction orotidine 5'-phosphate + diphosphate = orotate + 5-phospho-alpha-D-ribose 1-diphosphate. It functions in the pathway pyrimidine metabolism; UMP biosynthesis via de novo pathway; UMP from orotate: step 1/2. Its function is as follows. Catalyzes the transfer of a ribosyl phosphate group from 5-phosphoribose 1-diphosphate to orotate, leading to the formation of orotidine monophosphate (OMP). The sequence is that of Orotate phosphoribosyltransferase from Streptococcus thermophilus (strain CNRZ 1066).